We begin with the raw amino-acid sequence, 229 residues long: Secretory carrier-associated membrane protein 4 (229 aa).

Residues 1-39 (MSEKENNFPPLPKFIPVKPCFYQNFSDEIPVEHQVLVKR) are Cytoplasmic-facing. 4 consecutive transmembrane segments (helical) span residues 40–60 (IYRLWMFYCATLGVNLIACLA), 61–81 (WWIGGGSGTNFGLAFVWLLLF), 105–125 (FMAFFFIFGAQFVLTVIQAIG), and 149–169 (VVMLLPAIMFSVSAAMMAIAI). The Cytoplasmic portion of the chain corresponds to 170–229 (MKVHRIYRGAGGSFQKAQTEWNTGTWRNPPSREAQYNNFSGNSLPEYPTVPSYPGSGQWP). Thr194 carries the post-translational modification Phosphothreonine. Positions 208–229 (FSGNSLPEYPTVPSYPGSGQWP) are disordered.

It belongs to the SCAMP family.

It localises to the membrane. Its function is as follows. Probably involved in membrane protein trafficking. This Pongo abelii (Sumatran orangutan) protein is Secretory carrier-associated membrane protein 4 (SCAMP4).